Consider the following 134-residue polypeptide: UPF0412 protein YaaI (134 aa).

Residues 1 to 23 form the signal peptide; that stretch reads MRSVLTISASLLFGLALSSVAHA.

This sequence belongs to the UPF0412 family.

The chain is UPF0412 protein YaaI from Salmonella choleraesuis (strain SC-B67).